Here is a 285-residue protein sequence, read N- to C-terminus: 2-dehydro-3-deoxyphosphooctonate aldolase (285 aa).

Belongs to the KdsA family.

It localises to the cytoplasm. The catalysed reaction is D-arabinose 5-phosphate + phosphoenolpyruvate + H2O = 3-deoxy-alpha-D-manno-2-octulosonate-8-phosphate + phosphate. It functions in the pathway carbohydrate biosynthesis; 3-deoxy-D-manno-octulosonate biosynthesis; 3-deoxy-D-manno-octulosonate from D-ribulose 5-phosphate: step 2/3. The protein operates within bacterial outer membrane biogenesis; lipopolysaccharide biosynthesis. The protein is 2-dehydro-3-deoxyphosphooctonate aldolase of Polaromonas sp. (strain JS666 / ATCC BAA-500).